The following is a 202-amino-acid chain: Orotate phosphoribosyltransferase (202 aa).

5-phospho-alpha-D-ribose 1-diphosphate contacts are provided by residues K93 and 113–121; that span reads EDIITTGGS. 2 residues coordinate orotate: T117 and R145.

It belongs to the purine/pyrimidine phosphoribosyltransferase family. PyrE subfamily. Homodimer. It depends on Mg(2+) as a cofactor.

The enzyme catalyses orotidine 5'-phosphate + diphosphate = orotate + 5-phospho-alpha-D-ribose 1-diphosphate. The protein operates within pyrimidine metabolism; UMP biosynthesis via de novo pathway; UMP from orotate: step 1/2. Catalyzes the transfer of a ribosyl phosphate group from 5-phosphoribose 1-diphosphate to orotate, leading to the formation of orotidine monophosphate (OMP). The protein is Orotate phosphoribosyltransferase of Campylobacter fetus subsp. fetus (strain 82-40).